The primary structure comprises 211 residues: Urease accessory protein UreG (211 aa).

11 to 18 (GPVGAGKT) contacts GTP.

Belongs to the SIMIBI class G3E GTPase family. UreG subfamily. As to quaternary structure, homodimer. UreD, UreF and UreG form a complex that acts as a GTP-hydrolysis-dependent molecular chaperone, activating the urease apoprotein by helping to assemble the nickel containing metallocenter of UreC. The UreE protein probably delivers the nickel.

The protein resides in the cytoplasm. Facilitates the functional incorporation of the urease nickel metallocenter. This process requires GTP hydrolysis, probably effectuated by UreG. The polypeptide is Urease accessory protein UreG (Actinobacillus pleuropneumoniae serotype 5b (strain L20)).